Here is a 1247-residue protein sequence, read N- to C-terminus: ABC transporter B family member 14 (1247 aa).

Residues 48 to 337 form the ABC transmembrane type-1 1 domain; the sequence is MFLGGLGTCI…AVPSLSAISK (290 aa). The next 6 membrane-spanning stretches (helical) occupy residues 49-69, 95-115, 172-192, 196-216, 277-297, and 315-335; these read FLGG…FVFF, LYLV…VACW, HVLR…LSVW, LLTL…AIVM, LGVG…FWYA, and ILNV…LSAI. 2 N-linked (GlcNAc...) asparagine glycosylation sites follow: Asn362 and Asn392. The ABC transporter 1 domain maps to 373 to 608; sequence IEFCGVSFAY…GGDYATLVNC (236 aa). Position 407-414 (407-414) interacts with ATP; sequence GPSGSGKS. Residues 679-971 enclose the ABC transmembrane type-1 2 domain; it reads EWLYALLGSI…TLALTPDIVK (293 aa). Transmembrane regions (helical) follow at residues 680 to 700 and 727 to 747; these read WLYA…PALF and AIIF…QHYF. A glycan (N-linked (GlcNAc...) asparagine) is linked at Asn780. The next 3 helical transmembrane spans lie at 807 to 824, 830 to 850, and 915 to 935; these read IVQN…AFFY, AVVT…QLFL, and LSQC…SVLI. A glycan (N-linked (GlcNAc...) asparagine) is linked at Asn938. The helical transmembrane segment at 949–969 threads the bilayer; sequence FMVLLVTAYSVAETLALTPDI. One can recognise an ABC transporter 2 domain in the interval 1006–1242; it reads IEFRNVSFAY…SDGFYKKLTS (237 aa). Asn1010 carries an N-linked (GlcNAc...) asparagine glycan. 1041-1048 contacts ATP; the sequence is GPSGSGKS. Asn1108 carries N-linked (GlcNAc...) asparagine glycosylation.

Belongs to the ABC transporter superfamily. ABCB family. Multidrug resistance exporter (TC 3.A.1.201) subfamily.

The protein localises to the membrane. The chain is ABC transporter B family member 14 (ABCB14) from Arabidopsis thaliana (Mouse-ear cress).